The following is a 345-amino-acid chain: Heat-inducible transcription repressor HrcA (345 aa).

Belongs to the HrcA family.

Its function is as follows. Negative regulator of class I heat shock genes (grpE-dnaK-dnaJ and groELS operons). Prevents heat-shock induction of these operons. The protein is Heat-inducible transcription repressor HrcA of Dehalococcoides mccartyi (strain ATCC BAA-2100 / JCM 16839 / KCTC 5957 / BAV1).